Reading from the N-terminus, the 316-residue chain is Probable cell division protein WhiA (316 aa).

Positions 275–309 (TLKELGEMVSGGKISKSGINHRLRKIDDIAEKLRA) form a DNA-binding region, H-T-H motif.

Belongs to the WhiA family.

Involved in cell division and chromosome segregation. The protein is Probable cell division protein WhiA of Bacillus anthracis (strain CDC 684 / NRRL 3495).